The sequence spans 510 residues: NAD(P)H-quinone oxidoreductase subunit 2 B, chloroplastic (510 aa).

Helical transmembrane passes span 26–46 (LFDGSFIFPEGILIFGLILLL), 57–77 (IPWFYFISSISLVMSITALLF), 99–119 (IFQFLILLCSTLCIPLSVEYI), 124–144 (MAITEFLLFVLTATLGGMFLC), 149–169 (LITIFVAPECFSLCSYLLSGY), 183–203 (YLLMGGASSSILVHGFSWLYG), 227–247 (PGISIALIFITVGIGFKLSPA), 295–315 (WHPLLEILAILSMILGNLIAI), 323–342 (MLAYSSIGQIGYVIIGIIVG), 354–374 (YMLFYISMNLGTFACIVLFGL), 395–415 (ALSLALCLLSLGGLPPLAGFF), 418–438 (LHLFWCGWQAGLYFLVSIGLF), and 484–504 (MIVCVIASTIPGISMNPIIAI).

It belongs to the complex I subunit 2 family. NDH is composed of at least 16 different subunits, 5 of which are encoded in the nucleus.

It localises to the plastid. Its subcellular location is the chloroplast thylakoid membrane. The enzyme catalyses a plastoquinone + NADH + (n+1) H(+)(in) = a plastoquinol + NAD(+) + n H(+)(out). It catalyses the reaction a plastoquinone + NADPH + (n+1) H(+)(in) = a plastoquinol + NADP(+) + n H(+)(out). Its function is as follows. NDH shuttles electrons from NAD(P)H:plastoquinone, via FMN and iron-sulfur (Fe-S) centers, to quinones in the photosynthetic chain and possibly in a chloroplast respiratory chain. The immediate electron acceptor for the enzyme in this species is believed to be plastoquinone. Couples the redox reaction to proton translocation, and thus conserves the redox energy in a proton gradient. This chain is NAD(P)H-quinone oxidoreductase subunit 2 B, chloroplastic, found in Oenothera argillicola (Appalachian evening primrose).